The primary structure comprises 240 residues: 3-deoxy-D-manno-octulosonic acid kinase (240 aa).

Asp170 is a catalytic residue.

This sequence belongs to the protein kinase superfamily. KdkA/RfaP family.

It localises to the cell inner membrane. The catalysed reaction is an alpha-Kdo-(2-&gt;6)-lipid IVA + ATP = a 4-O-phospho-alpha-Kdo-(2-&gt;6)-lipid IVA + ADP + H(+). The protein operates within bacterial outer membrane biogenesis; LPS core biosynthesis. Its function is as follows. Catalyzes the ATP-dependent phosphorylation of the 3-deoxy-D-manno-octulosonic acid (Kdo) residue in Kdo-lipid IV(A) at the 4-OH position. The sequence is that of 3-deoxy-D-manno-octulosonic acid kinase from Actinobacillus succinogenes (strain ATCC 55618 / DSM 22257 / CCUG 43843 / 130Z).